We begin with the raw amino-acid sequence, 657 residues long: Protein mono-ADP-ribosyltransferase TIPARP (657 aa).

Residues Met-1 to Pro-10 are compositionally biased toward acidic residues. The interval Met-1–Asp-21 is disordered. Cys-39 is modified (ADP-ribosylcysteine). Positions Lys-41–Arg-47 match the Nuclear localization signal motif. The C3H1-type zinc finger occupies Glu-237–Leu-264. In terms of domain architecture, WWE spans Ser-332–Ile-410. In terms of domain architecture, PARP catalytic spans Tyr-449–Ile-657.

This sequence belongs to the ARTD/PARP family. As to quaternary structure, interacts with AHR. Auto-mono-ADP-ribosylated.

Its subcellular location is the nucleus. It carries out the reaction L-aspartyl-[protein] + NAD(+) = 4-O-(ADP-D-ribosyl)-L-aspartyl-[protein] + nicotinamide. It catalyses the reaction L-glutamyl-[protein] + NAD(+) = 5-O-(ADP-D-ribosyl)-L-glutamyl-[protein] + nicotinamide. The enzyme catalyses L-cysteinyl-[protein] + NAD(+) = S-(ADP-D-ribosyl)-L-cysteinyl-[protein] + nicotinamide + H(+). With respect to regulation, ADP-ribosyltransferase activity is inhibited by PJ34; inhibition is however not specific to TIPARP and other PARP-domain containing proteins are also inhibited by PJ34. Partially inhibited by KU0058948. Functionally, ADP-ribosyltransferase that mediates mono-ADP-ribosylation of glutamate, aspartate and cysteine residues on target proteins. Acts as a negative regulator of AHR by mediating mono-ADP-ribosylation of AHR, leading to inhibit transcription activator activity of AHR. The polypeptide is Protein mono-ADP-ribosyltransferase TIPARP (Homo sapiens (Human)).